Reading from the N-terminus, the 162-residue chain is NADH-quinone oxidoreductase subunit I 1 (162 aa).

2 4Fe-4S ferredoxin-type domains span residues 44–74 and 90–119; these read LRTY…VQAA and YKYQ…LTQE. [4Fe-4S] cluster is bound by residues cysteine 54, cysteine 57, cysteine 60, cysteine 64, cysteine 99, cysteine 102, cysteine 105, and cysteine 109.

This sequence belongs to the complex I 23 kDa subunit family. In terms of assembly, NDH-1 is composed of 14 different subunits. Subunits NuoA, H, J, K, L, M, N constitute the membrane sector of the complex. [4Fe-4S] cluster is required as a cofactor.

The protein localises to the cell membrane. The enzyme catalyses a quinone + NADH + 5 H(+)(in) = a quinol + NAD(+) + 4 H(+)(out). Its function is as follows. NDH-1 shuttles electrons from NADH, via FMN and iron-sulfur (Fe-S) centers, to quinones in the respiratory chain. The immediate electron acceptor for the enzyme in this species is believed to be ubiquinone. Couples the redox reaction to proton translocation (for every two electrons transferred, four hydrogen ions are translocated across the cytoplasmic membrane), and thus conserves the redox energy in a proton gradient. This Symbiobacterium thermophilum (strain DSM 24528 / JCM 14929 / IAM 14863 / T) protein is NADH-quinone oxidoreductase subunit I 1.